The chain runs to 783 residues: FYN-binding protein 1 (783 aa).

2 stretches are compositionally biased toward polar residues: residues M1–S18 and G25–A45. Residues M1–K502 are disordered. K3 is subject to N6-acetyllysine. Phosphoserine occurs at positions 28 and 46. Basic and acidic residues predominate over residues S69–K79. S225 carries the phosphoserine modification. 2 stretches are compositionally biased toward basic and acidic residues: residues P240–G252 and N278–A290. S329 carries the post-translational modification Phosphoserine. A compositionally biased stretch (pro residues) spans K345 to P363. The interaction with SKAP1 stretch occupies residues P348 to A448. The span at T374–Y387 shows a compositional bias: polar residues. Over residues L392–I424 the composition is skewed to pro residues. The segment covering L451–I465 has biased composition (acidic residues). Residues D456–T507 adopt a coiled-coil conformation. Phosphoserine is present on S457. Residues Y462–I465 carry the SH2-binding motif. Positions E466–K501 are enriched in basic and acidic residues. Positions K469–K505 match the Nuclear localization signal motif. Residues Q511–D572 enclose the SH3 1 domain. Phosphotyrosine is present on Y571. Phosphoserine is present on residues S573 and S580. The short motif at Y595–V598 is the SH2-binding; to LCP2 element. The disordered stretch occupies residues V598–E678. Acidic residues-rich tracts occupy residues P620 to D635 and M646 to T656. Positions Y625–I628 match the SH2-binding; to FYN motif. Y651 is modified (phosphotyrosine). The Nuclear localization signal motif lies at K674–K700. Residues K700–G768 enclose the SH3 2 domain.

Part of a complex consisting of SKAP2, FYB1 and PTPNS1. Part of a complex consisting of SKAP2, FYB1 and LILRB3. Part of a complex consisting of SKAP1, FYB1 and CLNK. Interacts with CLNK (via its SH2 domain); this interaction allows SKAP1 and FYB1 to recruit FYN to the complex, thus promoting the phosphorylation of CLNK by FYN. Interacts with FYN. Interacts with LCP2. Interacts with SKAP1. Interacts with SKAP2. Interacts with FASLG. Interacts with EVL. Interacts with TMEM47. Interacts with LCK. Post-translationally, T-cell receptor ligation leads to increased tyrosine phosphorylation. In terms of tissue distribution, expressed in hematopoietic tissues such as myeloid and T-cells, spleen and thymus. Not expressed in B-cells, nor in non-lymphoid tissues.

The protein localises to the cytoplasm. It localises to the nucleus. Its subcellular location is the cell junction. Its function is as follows. Acts as an adapter protein of the FYN and LCP2 signaling cascades in T-cells. May play a role in linking T-cell signaling to remodeling of the actin cytoskeleton. Modulates the expression of IL2. Involved in platelet activation. Prevents the degradation of SKAP1 and SKAP2. May be involved in high affinity immunoglobulin epsilon receptor signaling in mast cells. This Homo sapiens (Human) protein is FYN-binding protein 1.